A 187-amino-acid chain; its full sequence is Elongation factor P (187 aa).

This sequence belongs to the elongation factor P family.

It localises to the cytoplasm. It participates in protein biosynthesis; polypeptide chain elongation. Involved in peptide bond synthesis. Stimulates efficient translation and peptide-bond synthesis on native or reconstituted 70S ribosomes in vitro. Probably functions indirectly by altering the affinity of the ribosome for aminoacyl-tRNA, thus increasing their reactivity as acceptors for peptidyl transferase. This chain is Elongation factor P, found in Helicobacter acinonychis (strain Sheeba).